Here is a 471-residue protein sequence, read N- to C-terminus: Siroheme synthase (471 aa).

Residues 1–203 are precorrin-2 dehydrogenase /sirohydrochlorin ferrochelatase; sequence MDYLPLFADI…GDWESAEKTL (203 aa). Residues 22–23 and 43–44 contribute to the NAD(+) site; these read EV and KN. Residue Ser128 is modified to Phosphoserine. The tract at residues 215-471 is uroporphyrinogen-III C-methyltransferase; sequence GEIILVGAGP…DTKSSLINLA (257 aa). Residue Pro224 coordinates S-adenosyl-L-methionine. Asp247 acts as the Proton acceptor in catalysis. The active-site Proton donor is Lys269. Residues 300–302, Ile305, 330–331, Met382, and Ala411 contribute to the S-adenosyl-L-methionine site; these read GGD and TA.

It in the N-terminal section; belongs to the precorrin-2 dehydrogenase / sirohydrochlorin ferrochelatase family. In the C-terminal section; belongs to the precorrin methyltransferase family.

It carries out the reaction uroporphyrinogen III + 2 S-adenosyl-L-methionine = precorrin-2 + 2 S-adenosyl-L-homocysteine + H(+). The enzyme catalyses precorrin-2 + NAD(+) = sirohydrochlorin + NADH + 2 H(+). The catalysed reaction is siroheme + 2 H(+) = sirohydrochlorin + Fe(2+). It participates in cofactor biosynthesis; adenosylcobalamin biosynthesis; precorrin-2 from uroporphyrinogen III: step 1/1. The protein operates within cofactor biosynthesis; adenosylcobalamin biosynthesis; sirohydrochlorin from precorrin-2: step 1/1. Its pathway is porphyrin-containing compound metabolism; siroheme biosynthesis; precorrin-2 from uroporphyrinogen III: step 1/1. It functions in the pathway porphyrin-containing compound metabolism; siroheme biosynthesis; siroheme from sirohydrochlorin: step 1/1. It participates in porphyrin-containing compound metabolism; siroheme biosynthesis; sirohydrochlorin from precorrin-2: step 1/1. In terms of biological role, multifunctional enzyme that catalyzes the SAM-dependent methylations of uroporphyrinogen III at position C-2 and C-7 to form precorrin-2 via precorrin-1. Then it catalyzes the NAD-dependent ring dehydrogenation of precorrin-2 to yield sirohydrochlorin. Finally, it catalyzes the ferrochelation of sirohydrochlorin to yield siroheme. The polypeptide is Siroheme synthase (Zymomonas mobilis subsp. mobilis (strain ATCC 31821 / ZM4 / CP4)).